The primary structure comprises 870 residues: H(+)/Cl(-) exchange transporter 6 (870 aa).

Residues 1–80 (MAGCRGSVCC…KKGRRYEAVK (80 aa)) lie on the Cytoplasmic side of the membrane. 2 consecutive transmembrane segments (helical) span residues 81–113 (WMVV…FGVV) and 128–150 (LSLL…LVLI). Residues 156-160 (GSGIP) carry the Selectivity filter part_1 motif. Serine 157 contributes to the chloride binding site. The helical intramembrane region spans 159 to 166 (IPEIKCYL). Helical transmembrane passes span 176–194 (RLRT…VSGG) and 200–217 (EGPM…LPQF). A Selectivity filter part_2 motif is present at residues 198–202 (GKEGP). 2 consecutive intramembrane regions (helical) follow at residues 241 to 253 (FVSA…VAAA) and 257 to 265 (PIGGTLFSL). 3 helical membrane-spanning segments follow: residues 277–294 (TWKV…LNFF), 335–364 (GFFV…YRMR), and 371–392 (KLVR…VFVA). N-linked (GlcNAc...) asparagine glycosylation is found at asparagine 410, asparagine 423, and asparagine 433. Transmembrane regions (helical) follow at residues 463 to 482 (PVTL…WTFG) and 488 to 512 (GLFV…KSYI). A Selectivity filter part_3 motif is present at residues 488–492 (GLFVP). Phenylalanine 490 lines the chloride pocket. The helical intramembrane region spans 520-534 (GTFALIGAAAFLGGV). An intramembrane region (note=Loop between two helices) is located at residues 535–537 (VRM). The helical intramembrane region spans 538–549 (TISLTVILIEST). Residues 550–553 (NEIT) constitute an intramembrane region (note=Loop between two helices). The helical transmembrane segment at 554–572 (YGLPIMVTLMVAKWTGDLF) threads the bilayer. The Cytoplasmic segment spans residues 573–870 (NKGIYDVHIG…ARLRQHYQTL (298 aa)). A chloride-binding site is contributed by tyrosine 577. Residues 606–663 (MEPNLTYVYPHTRIQSLVSILRTTVHHAFPVVTENRGNEKEFMKGNQLISNNIKFKKS) form the CBS 1 domain. ATP is bound at residue 631 to 633 (HHA). Serine 774 is modified (phosphoserine). The CBS 2 domain occupies 808 to 869 (MNPSPFTVSP…QARLRQHYQT (62 aa)). 850–853 (TRHN) is a binding site for ATP.

Belongs to the chloride channel (TC 2.A.49) family. ClC-6/CLCN6 subfamily. N-glycosylated on several asparagine residues. As to expression, detected in whole brain and in hippocampus neurons (at protein level). Detected in brain, trigeminus, dorsal root ganglion, spinal cord, eye, kidney, testis, skeletal muscle, thymus and pancreas. Isoform ClC-6c is expressed only in kidney.

The protein resides in the late endosome membrane. It carries out the reaction 2 chloride(in) + H(+)(out) = 2 chloride(out) + H(+)(in). Its function is as follows. Voltage-gated channel mediating the exchange of chloride ions against protons. Functions as antiporter and contributes to the acidification of the late endosome lumen. The CLC channel family contains both chloride channels and proton-coupled anion transporters that exchange chloride or another anion for protons. The presence of conserved gating glutamate residues is typical for family members that function as antiporters. The protein is H(+)/Cl(-) exchange transporter 6 of Mus musculus (Mouse).